Consider the following 291-residue polypeptide: Homoserine kinase (291 aa).

Residue 80 to 90 participates in ATP binding; that stretch reads PLARGLGSSST.

The protein belongs to the GHMP kinase family. Homoserine kinase subfamily.

It is found in the cytoplasm. It catalyses the reaction L-homoserine + ATP = O-phospho-L-homoserine + ADP + H(+). Its pathway is amino-acid biosynthesis; L-threonine biosynthesis; L-threonine from L-aspartate: step 4/5. Its function is as follows. Catalyzes the ATP-dependent phosphorylation of L-homoserine to L-homoserine phosphate. The protein is Homoserine kinase of Lactiplantibacillus plantarum (strain ATCC BAA-793 / NCIMB 8826 / WCFS1) (Lactobacillus plantarum).